The sequence spans 142 residues: Putative pre-16S rRNA nuclease (142 aa).

The protein belongs to the YqgF nuclease family.

It is found in the cytoplasm. Functionally, could be a nuclease involved in processing of the 5'-end of pre-16S rRNA. The sequence is that of Putative pre-16S rRNA nuclease from Saccharophagus degradans (strain 2-40 / ATCC 43961 / DSM 17024).